The sequence spans 200 residues: Interferon lambda-1 (200 aa).

The signal sequence occupies residues 1–19 (MAAAWTVVLVTLVLGLAVA). Asn65 carries an N-linked (GlcNAc...) asparagine glycan. Cys68 and Cys164 are oxidised to a cystine.

It belongs to the lambda interferon family.

The protein resides in the secreted. Cytokine with antiviral, antitumour and immunomodulatory activities. Plays a critical role in the antiviral host defense, predominantly in the epithelial tissues. Acts as a ligand for the heterodimeric class II cytokine receptor composed of IL10RB and IFNLR1, and receptor engagement leads to the activation of the JAK/STAT signaling pathway resulting in the expression of IFN-stimulated genes (ISG), which mediate the antiviral state. Has a restricted receptor distribution and therefore restricted targets: is primarily active in epithelial cells and this cell type-selective action is because of the epithelial cell-specific expression of its receptor IFNLR1. Exerts an immunomodulatory effect by up-regulating MHC class I antigen expression. The polypeptide is Interferon lambda-1 (IFNL1) (Homo sapiens (Human)).